A 554-amino-acid polypeptide reads, in one-letter code: Phospho-2-dehydro-3-deoxyheptonate aldolase 1, chloroplastic (554 aa).

Residues 1-39 constitute a chloroplast transit peptide; that stretch reads MSLATSSSMAGGAAVVPRSATATTASAFVTMKRRATAVR. Residues 41-70 are disordered; that stretch reads VHAAEPSKNPPVGVPSAAKTSSPSVAAPEK.

This sequence belongs to the class-II DAHP synthase family.

The protein localises to the plastid. It is found in the chloroplast. The catalysed reaction is D-erythrose 4-phosphate + phosphoenolpyruvate + H2O = 7-phospho-2-dehydro-3-deoxy-D-arabino-heptonate + phosphate. It functions in the pathway metabolic intermediate biosynthesis; chorismate biosynthesis; chorismate from D-erythrose 4-phosphate and phosphoenolpyruvate: step 1/7. The sequence is that of Phospho-2-dehydro-3-deoxyheptonate aldolase 1, chloroplastic (DAHPS1) from Oryza sativa subsp. japonica (Rice).